A 678-amino-acid chain; its full sequence is DNA ligase (678 aa).

Residues 47–51, 96–97, and Glu122 contribute to the NAD(+) site; these read DSDYD and SL. Lys124 (N6-AMP-lysine intermediate) is an active-site residue. Residues Arg145, Glu182, Lys300, and Lys324 each coordinate NAD(+). 4 residues coordinate Zn(2+): Cys418, Cys421, Cys436, and Cys442. Residues 602 to 678 form the BRCT domain; the sequence is AYNESFTGKT…ILEDNLKDLL (77 aa).

The protein belongs to the NAD-dependent DNA ligase family. LigA subfamily. The cofactor is Mg(2+). Mn(2+) is required as a cofactor.

It catalyses the reaction NAD(+) + (deoxyribonucleotide)n-3'-hydroxyl + 5'-phospho-(deoxyribonucleotide)m = (deoxyribonucleotide)n+m + AMP + beta-nicotinamide D-nucleotide.. Functionally, DNA ligase that catalyzes the formation of phosphodiester linkages between 5'-phosphoryl and 3'-hydroxyl groups in double-stranded DNA using NAD as a coenzyme and as the energy source for the reaction. It is essential for DNA replication and repair of damaged DNA. In Francisella tularensis subsp. tularensis (strain SCHU S4 / Schu 4), this protein is DNA ligase.